The sequence spans 146 residues: Kappa-casein (146 aa).

Residues Thr-107 and Thr-112 are each glycosylated (O-linked (GalNAc...) threonine). Position 125 is a phosphoserine; alternate (Ser-125). Ser-125 carries O-linked (GalNAc...) serine; alternate glycosylation. A glycan (O-linked (GalNAc...) threonine) is linked at Thr-142. Phosphoserine is present on Ser-143.

The protein belongs to the kappa-casein family. As to expression, mammary gland specific. Secreted in milk.

It localises to the secreted. Functionally, kappa-casein stabilizes micelle formation, preventing casein precipitation in milk. This is Kappa-casein (CSN3) from Tapirus indicus (Asiatic tapir).